Reading from the N-terminus, the 426-residue chain is uncharacterized protein (426 aa).

This sequence to M.leprae L518_C2_147 and M.tuberculosis Rv1524.

This is an uncharacterized protein from Mycobacterium tuberculosis (strain CDC 1551 / Oshkosh).